We begin with the raw amino-acid sequence, 1357 residues long: DNA-directed RNA polymerase subunit beta (1357 aa).

It belongs to the RNA polymerase beta chain family. In terms of assembly, the RNAP catalytic core consists of 2 alpha, 1 beta, 1 beta' and 1 omega subunit. When a sigma factor is associated with the core the holoenzyme is formed, which can initiate transcription.

The enzyme catalyses RNA(n) + a ribonucleoside 5'-triphosphate = RNA(n+1) + diphosphate. Functionally, DNA-dependent RNA polymerase catalyzes the transcription of DNA into RNA using the four ribonucleoside triphosphates as substrates. This is DNA-directed RNA polymerase subunit beta from Hahella chejuensis (strain KCTC 2396).